We begin with the raw amino-acid sequence, 263 residues long: Ribosomal RNA large subunit methyltransferase E (263 aa).

S-adenosyl-L-methionine is bound by residues G50, W52, D68, N84, and D109. K149 serves as the catalytic Proton acceptor. The 59-residue stretch at P196–E254 folds into the TRAM domain.

This sequence belongs to the class I-like SAM-binding methyltransferase superfamily. RNA methyltransferase RlmE family.

It is found in the cytoplasm. It carries out the reaction uridine(2552) in 23S rRNA + S-adenosyl-L-methionine = 2'-O-methyluridine(2552) in 23S rRNA + S-adenosyl-L-homocysteine + H(+). Its function is as follows. Specifically methylates the uridine in position 2552 of 23S rRNA at the 2'-O position of the ribose in the fully assembled 50S ribosomal subunit. This is Ribosomal RNA large subunit methyltransferase E from Methanosarcina barkeri (strain Fusaro / DSM 804).